Consider the following 506-residue polypeptide: Exopolyphosphatase (506 aa).

The protein belongs to the GppA/Ppx family. Homodimer. Mg(2+) is required as a cofactor.

The protein localises to the cell membrane. It catalyses the reaction [phosphate](n) + H2O = [phosphate](n-1) + phosphate + H(+). The enzyme catalyses [phosphate](n) + ATP = [phosphate](n+1) + ADP. With respect to regulation, exopolyphosphatase activity is stimulated by NH(4)(+) and K(+). Phosphotransferase activity is insensitive to the addition of K(+) or NH(4)(+) ions. Its function is as follows. Degradation of inorganic polyphosphates (polyP). Releases orthophosphate processively from the ends of the polyP chain. Also has polyphosphate:ADP phosphotransferase activity, catalyzing the production of ATP from ADP and polyP. The sequence is that of Exopolyphosphatase from Pseudomonas aeruginosa (strain ATCC 15692 / DSM 22644 / CIP 104116 / JCM 14847 / LMG 12228 / 1C / PRS 101 / PAO1).